Consider the following 875-residue polypeptide: MHPPPPDAGVAMDFGQNSLFGYMEDLQELTIIERPVRRSLKTPEEIERLTVDEDLSDIDRAVYLLSAGQDVQGASVIANLPFLMRQNPTETLRRVLPKVREVLHVASVEMQLTAAVSFLTILQEESMSVHTCAHSFLQVILLHLEHRDTGVSNAWLETLLSAVELLPKETLRHEILNPLVSKAQLSQTVQSRLVSCKILGKITNKFDAHSIKREILPLVKSLCQDVEYEVRSCMCRQLENIAQGIGAELTKNVVLPELIELSRDESGSVRLAAFETLVNMLDMFDTDDRSQTILPLVKSFCEKSFKADESILISLSFHLGKLCHGLYGIFTPDQHLRFLEFYKKLCTLGLQQENGHNESQIPSQIVEQEKKYTSVRKNCAYNFPAMIVFVDPKNFHMELYSTFFCLCHDPEVPVRHTIAICFYEVSKLLNSGVHLIHKELITLLQDESLEVLDALINHLPEILELMSTGGENSVQENKFSSVPDLIPALTAAEQRAAASLKWRTHEKLLQKYTCLPHIISSDQIYYRFLQRMFTIMMTNNVLPVQRAAARTLCIFLRYNRKQEQRHEVIQKLIEQLGQGKSYWNRLRFLDTCEFIIEIFSRSFFCKYFFLPVIELTHDPVANVRMKLCYLLPKVKSALKIPADMHLLQQLEMCVRKLLCQEKDKDVLAIVKKTVLELDRMEMSMDMFQKKNYEKDLLDQEKEREELLFLEMEQLEKEKHQSDGRLASDKSFEKKRRDSRTSTQSLSKNLPISVPGPSSSTASTSKEIKKSKLTRSQSFNNQAFHAKYGTLDKCASKSSTLAHTSSVSGLVRTAMLSLTDDSFRTRNASSVPASFSPNPVMPSTSRGPGNTADPKSSGSKDAQPRKATLKSRKSNP.

HEAT repeat units follow at residues 215 to 253 (ILPLVKSLCQDVEYEVRSCMCRQLENIAQGIGAELTKNV) and 254 to 292 (VLPELIELSRDESGSVRLAAFETLVNMLDMFDTDDRSQT). Residues 686 to 730 (MFQKKNYEKDLLDQEKEREELLFLEMEQLEKEKHQSDGRLASDKS) adopt a coiled-coil conformation. The segment covering 718–739 (KHQSDGRLASDKSFEKKRRDSR) has biased composition (basic and acidic residues). The interval 718 to 773 (KHQSDGRLASDKSFEKKRRDSRTSTQSLSKNLPISVPGPSSSTASTSKEIKKSKLT) is disordered. Polar residues predominate over residues 740-764 (TSTQSLSKNLPISVPGPSSSTASTS). Ser-777 is modified (phosphoserine). At Thr-799 the chain carries Phosphothreonine. The span at 825–859 (RNASSVPASFSPNPVMPSTSRGPGNTADPKSSGSK) shows a compositional bias: polar residues. The tract at residues 825 to 875 (RNASSVPASFSPNPVMPSTSRGPGNTADPKSSGSKDAQPRKATLKSRKSNP) is disordered. A compositionally biased stretch (basic residues) spans 866–875 (ATLKSRKSNP).

In terms of assembly, serine/threonine-protein phosphatase 4 (PP4) occurs in different assemblies of the catalytic and one or more regulatory subunits. Component of the PP4 complex PPP4C-PPP4R4.

Its subcellular location is the cytoplasm. Functionally, putative regulatory subunit of serine/threonine-protein phosphatase 4. The sequence is that of Serine/threonine-protein phosphatase 4 regulatory subunit 4 (Ppp4r4) from Mus musculus (Mouse).